A 303-amino-acid polypeptide reads, in one-letter code: Epimerase family protein YfhF (303 aa).

This sequence belongs to the NAD(P)-dependent epimerase/dehydratase family. SDR39U1 subfamily.

In Bacillus subtilis (strain 168), this protein is Epimerase family protein YfhF (yfhF).